The following is a 63-amino-acid chain: Small ribosomal subunit protein bS21 (63 aa).

The protein belongs to the bacterial ribosomal protein bS21 family.

The chain is Small ribosomal subunit protein bS21 from Parabacteroides distasonis (strain ATCC 8503 / DSM 20701 / CIP 104284 / JCM 5825 / NCTC 11152).